Consider the following 331-residue polypeptide: Smad-related protein daf-14 (331 aa).

Residues tryptophan 134–serine 331 form the MH2 domain. A disordered region spans residues glutamate 168–isoleucine 187. Positions serine 175–serine 185 are enriched in low complexity.

As to quaternary structure, interacts with R-SMAD daf-8 and co-SMAD daf-3. Interacts with daf-3 in a daf-8 dependent manner.

Functionally, probably an atypical receptor-regulated SMAD (R-SMAD) that is an intracellular signal transducer and transcriptional modulator activated by TGF-beta-like daf-7 signaling. Plays a role in TGF-beta-like daf-7 signaling in regulating entry into a developmentally arrested larval state known as dauer, in response to harsh environmental conditions; partially redundant with R-SMAD daf-8. In Caenorhabditis elegans, this protein is Smad-related protein daf-14.